The sequence spans 83 residues: uncharacterized protein (83 aa).

This is an uncharacterized protein from Escherichia phage Bf23 (Enterobacteria phage BF23).